Consider the following 248-residue polypeptide: NAD(P)H-quinone oxidoreductase subunit K 1 (248 aa).

A propeptide spanning residues 1–2 (MS) is cleaved from the precursor. C62, C63, C127, and C158 together coordinate [4Fe-4S] cluster. Residues 228–248 (MGMPVPPALTTSQQKEQLNRG) are disordered. Residues 236–248 (LTTSQQKEQLNRG) are compositionally biased toward polar residues.

Belongs to the complex I 20 kDa subunit family. In terms of assembly, NDH-1 can be composed of about 15 different subunits; different subcomplexes with different compositions have been identified which probably have different functions. It depends on [4Fe-4S] cluster as a cofactor.

It is found in the cellular thylakoid membrane. The enzyme catalyses a plastoquinone + NADH + (n+1) H(+)(in) = a plastoquinol + NAD(+) + n H(+)(out). It catalyses the reaction a plastoquinone + NADPH + (n+1) H(+)(in) = a plastoquinol + NADP(+) + n H(+)(out). Functionally, NDH-1 shuttles electrons from an unknown electron donor, via FMN and iron-sulfur (Fe-S) centers, to quinones in the respiratory and/or the photosynthetic chain. The immediate electron acceptor for the enzyme in this species is believed to be plastoquinone. Couples the redox reaction to proton translocation, and thus conserves the redox energy in a proton gradient. Cyanobacterial NDH-1 also plays a role in inorganic carbon-concentration. In Synechocystis sp. (strain ATCC 27184 / PCC 6803 / Kazusa), this protein is NAD(P)H-quinone oxidoreductase subunit K 1.